Here is a 58-residue protein sequence, read N- to C-terminus: Small ribosomal subunit protein bS21 (58 aa).

Over residues 32-42 (IRKREHYEKPS) the composition is skewed to basic and acidic residues. Residues 32 to 58 (IRKREHYEKPSVKRKKKSEAARKRKFK) form a disordered region. A compositionally biased stretch (basic residues) spans 43–58 (VKRKKKSEAARKRKFK).

The protein belongs to the bacterial ribosomal protein bS21 family.

This chain is Small ribosomal subunit protein bS21, found in Lachnoclostridium phytofermentans (strain ATCC 700394 / DSM 18823 / ISDg) (Clostridium phytofermentans).